The following is a 479-amino-acid chain: Poly(A) polymerase catalytic subunit (479 aa).

Catalysis depends on residues aspartate 202 and aspartate 204. Ca(2+)-binding residues include aspartate 202, aspartate 204, and aspartate 253.

Belongs to the poxviridae poly(A) polymerase catalytic subunit family. In terms of assembly, heterodimer of a large (catalytic) subunit and a small (regulatory) subunit.

The enzyme catalyses RNA(n) + ATP = RNA(n)-3'-adenine ribonucleotide + diphosphate. Its function is as follows. Polymerase that creates the 3'-poly(A) tail of mRNA's. This chain is Poly(A) polymerase catalytic subunit (OPG063), found in Bos taurus (Bovine).